A 524-amino-acid chain; its full sequence is M-phase inducer phosphatase 1 (524 aa).

The short motif at 74-84 (MGSSESTDSGF) is the Phosphodegron element. Position 76 is a phosphoserine; by CHEK1 (Ser76). Phosphoserine; by NEK11 occurs at positions 79, 82, and 88. Ser107 carries the post-translational modification Phosphoserine. At Ser124 the chain carries Phosphoserine; by CHEK1 and CHEK2. Residues 141–143 (KEN) carry the KEN box motif. Ser178 carries the phosphoserine; by CHEK1 modification. Residues 264–317 (LCSSSTRSVLKRPERSQEESPPGSTKRRKSMSGASPKESTNPEKAHETLHQSLS) form a disordered region. Ser279 and Ser293 each carry phosphoserine; by CHEK1 and CHEK2. Over residues 303–312 (TNPEKAHETL) the composition is skewed to basic and acidic residues. Ser321 carries the post-translational modification Phosphoserine. A Rhodanese domain is found at 376–482 (LIKEFVIIDC…FFMKCQSYCE (107 aa)). Residue Cys431 is part of the active site. Thr507 is modified (phosphothreonine; by CHEK1). Ser513 and Ser519 each carry phosphoserine; by PLK3.

The protein belongs to the MPI phosphatase family. As to quaternary structure, interacts with CCNB1/cyclin B1. Interacts with YWHAE/14-3-3 epsilon when phosphorylated. Interacts with CUL1 specifically when CUL1 is neddylated and active. Interacts with BTRC/BTRCP1 and FBXW11/BTRCP2. Interactions with CUL1, BTRC and FBXW11 are enhanced upon DNA damage. Interacts with CHEK2; mediates CDC25A phosphorylation and degradation in response to infrared-induced DNA damages. Interacts with HSP90AB1; prevents heat shock-mediated CDC25A degradation and contributes to cell cycle progression. Phosphorylated by CHEK1 on Ser-76, Ser-124, Ser-178, Ser-279, Ser-293 and Thr-507 during checkpoint mediated cell cycle arrest. Also phosphorylated by CHEK2 on Ser-124, Ser-279, and Ser-293 during checkpoint mediated cell cycle arrest. Phosphorylation on Ser-178 and Thr-507 creates binding sites for YWHAE/14-3-3 epsilon which inhibits CDC25A. Phosphorylation on Ser-76, Ser-124, Ser-178, Ser-279 and Ser-293 may also promote ubiquitin-dependent proteolysis of CDC25A by the SCF complex. Phosphorylation of CDC25A at Ser-76 by CHEK1 primes it for subsequent phosphorylation at Ser-79, Ser-82 and Ser-88 by NEK11. Phosphorylation by NEK11 is required for BTRC-mediated polyubiquitination and degradation. Phosphorylation by PIM1 leads to an increase in phosphatase activity. Phosphorylated by PLK3 following DNA damage, leading to promote its ubiquitination and degradation. Post-translationally, ubiquitinated by the anaphase promoting complex/cyclosome (APC/C) ubiquitin ligase complex that contains FZR1/CDH1 during G1 phase leading to its degradation by the proteasome. Ubiquitinated by a SCF complex containing BTRC and FBXW11 during S phase leading to its degradation by the proteasome. Deubiquitination by USP17L2/DUB3 leads to its stabilization.

It catalyses the reaction O-phospho-L-tyrosyl-[protein] + H2O = L-tyrosyl-[protein] + phosphate. Stimulated by B-type cyclins. Stimulated by PIM1-mediated phosphorylation. Functionally, tyrosine protein phosphatase which functions as a dosage-dependent inducer of mitotic progression. Directly dephosphorylates CDK1 and stimulates its kinase activity. Also dephosphorylates CDK2 in complex with cyclin-E, in vitro. The protein is M-phase inducer phosphatase 1 (CDC25A) of Homo sapiens (Human).